A 293-amino-acid chain; its full sequence is Putative DNA glycosylase At3g47830 (293 aa).

Basic residues predominate over residues 1-10 (MSKAQKRKRL). Positions 1 to 34 (MSKAQKRKRLNKYDGESKTPANKSTVDGGNPYPT) are disordered. Residues N108 and K151 each coordinate DNA. Catalysis depends on K196, which acts as the Schiff-base intermediate with DNA. Residues H216 and D232 each contribute to the DNA site.

The protein belongs to the DNA glycosylase family.

This is Putative DNA glycosylase At3g47830 from Arabidopsis thaliana (Mouse-ear cress).